The chain runs to 225 residues: MAETKIPRATAKRLPIYYRYLNILLDADKKRVSSTELSEAVKVDSATIRRDFSYFGALGKRGYGYDVETLLAFFKKILNQDTLTNVALIGVGNLGHALLNFNFHKNSNVRISAAFDVNEAIANTVQSGVPVYPMTELKKQLIEQQIEIAILTVPTTVVQKITDDLVDANVKGIMNFTPLRISVPETVRVQNVDLTNELQTLIYFIEHYGQQLGDNGNDDENETED.

The H-T-H motif DNA-binding region spans 16-55 (IYYRYLNILLDADKKRVSSTELSEAVKVDSATIRRDFSYF). NAD(+) is bound at residue 90–95 (GVGNLG).

The protein belongs to the transcriptional regulatory Rex family. As to quaternary structure, homodimer.

It is found in the cytoplasm. Functionally, modulates transcription in response to changes in cellular NADH/NAD(+) redox state. The protein is Redox-sensing transcriptional repressor Rex of Lactiplantibacillus plantarum (strain ATCC BAA-793 / NCIMB 8826 / WCFS1) (Lactobacillus plantarum).